The chain runs to 83 residues: Protein kreg-1 (83 aa).

Positions 62 to 83 (GHHHHHHGHHFGHHHHHHHGHH) are disordered.

As to expression, weakly expressed in the intestine, but expression is up-regulated in response to Cu(2+).

In terms of biological role, plays a role in the stress response to heavy metals such as copper, probably in a fos-1/kgb-1-dependent manner. This is Protein kreg-1 from Caenorhabditis elegans.